Reading from the N-terminus, the 638-residue chain is LIM domain kinase 2 (638 aa).

LIM zinc-binding domains lie at 12-63 (CQGC…CHKD) and 72-124 (CHGC…CGKC). Residues 152-239 (HISMPATTEG…TLQLLIEHDP (88 aa)) enclose the PDZ domain. The interval 280-304 (RRRSLRRSNSISKSPGPSSPKEPLL) is disordered. A compositionally biased stretch (low complexity) spans 286–304 (RSNSISKSPGPSSPKEPLL). Residues Ser293 and Ser298 each carry the phosphoserine modification. Residues 331 to 608 (LIHGEVLGKG…DFFEALSLYL (278 aa)) enclose the Protein kinase domain. ATP is bound by residues 337–345 (LGKGFFGQA) and Asn360. Asp451 is a catalytic residue. The residue at position 505 (Thr505) is a Phosphothreonine; by ROCK1 and CDC42BP.

It belongs to the protein kinase superfamily. TKL Ser/Thr protein kinase family. Binds ROCK1 and MARF1. Interacts with NISCH. In terms of processing, phosphorylated on serine and/or threonine residues by ROCK1.

Its subcellular location is the cytoplasm. The protein localises to the cytoskeleton. It is found in the spindle. It localises to the microtubule organizing center. The protein resides in the centrosome. The catalysed reaction is L-seryl-[protein] + ATP = O-phospho-L-seryl-[protein] + ADP + H(+). It carries out the reaction L-threonyl-[protein] + ATP = O-phospho-L-threonyl-[protein] + ADP + H(+). Functionally, serine/threonine-protein kinase that plays an essential role in the regulation of actin filament dynamics. Acts downstream of several Rho family GTPase signal transduction pathways. Involved in astral microtubule organization and mitotic spindle orientation during early stages of mitosis by mediating phosphorylation of TPPP. Displays serine/threonine-specific phosphorylation of myelin basic protein and histone (MBP) in vitro. Suppresses ciliogenesis via multiple pathways; phosphorylation of CFL1, suppression of directional trafficking of ciliary vesicles to the ciliary base, and by facilitating YAP1 nuclear localization where it acts as a transcriptional corepressor of the TEAD4 target genes AURKA and PLK1. The polypeptide is LIM domain kinase 2 (LIMK2) (Bos taurus (Bovine)).